A 226-amino-acid chain; its full sequence is NAD(P)H-quinone oxidoreductase subunit K, chloroplastic (226 aa).

[4Fe-4S] cluster contacts are provided by C43, C44, C108, and C139.

Belongs to the complex I 20 kDa subunit family. In terms of assembly, NDH is composed of at least 16 different subunits, 5 of which are encoded in the nucleus. Requires [4Fe-4S] cluster as cofactor.

The protein resides in the plastid. It is found in the chloroplast thylakoid membrane. It carries out the reaction a plastoquinone + NADH + (n+1) H(+)(in) = a plastoquinol + NAD(+) + n H(+)(out). It catalyses the reaction a plastoquinone + NADPH + (n+1) H(+)(in) = a plastoquinol + NADP(+) + n H(+)(out). NDH shuttles electrons from NAD(P)H:plastoquinone, via FMN and iron-sulfur (Fe-S) centers, to quinones in the photosynthetic chain and possibly in a chloroplast respiratory chain. The immediate electron acceptor for the enzyme in this species is believed to be plastoquinone. Couples the redox reaction to proton translocation, and thus conserves the redox energy in a proton gradient. This chain is NAD(P)H-quinone oxidoreductase subunit K, chloroplastic, found in Lupinus luteus (European yellow lupine).